We begin with the raw amino-acid sequence, 620 residues long: Cilia- and flagella-associated protein 52 (620 aa).

12 WD repeats span residues 62-106 (GHSN…LMAR), 109-150 (LHKG…AICG), 156-195 (LNVG…RKIW), 203-242 (QMKR…LADT), 288-327 (QLQG…ETLV), 330-369 (CHFE…ELLR), 372-411 (VPNM…LMYV), 415-454 (AHRI…QKLE), 459-498 (EHKS…RNQM), 500-539 (LANT…GIRE), 543-582 (SLSG…VTHV), and 585-620 (GHSG…PFPS).

This sequence belongs to the CFAP52 family. As to quaternary structure, microtubule inner protein component of sperm flagellar doublet microtubules. Interacts with BRCA2. Interacts with the CCT chaperonin complex. Interacts with HSP70. Interacts with AK8. Interacts with CFAP45. Interacts with DNAI1. Interacts with IQDC. As to expression, expressed in respiratory cells and sperm (at protein level).

It is found in the cytoplasm. The protein localises to the cytoskeleton. Its subcellular location is the cilium axoneme. The protein resides in the flagellum axoneme. Microtubule inner protein (MIP) part of the dynein-decorated doublet microtubules (DMTs) in cilia axoneme. Important for proper ciliary and flagellar beating. May act in cooperation with CFAP45 and axonemal dynein subunit DNAH11. May play a role in cell growth and/or survival. In Sus scrofa (Pig), this protein is Cilia- and flagella-associated protein 52 (CFAP52).